The chain runs to 442 residues: UDP-N-acetylmuramoylalanine--D-glutamate ligase (442 aa).

113–119 serves as a coordination point for ATP; that stretch reads GSNGKTT.

Belongs to the MurCDEF family.

The protein resides in the cytoplasm. It catalyses the reaction UDP-N-acetyl-alpha-D-muramoyl-L-alanine + D-glutamate + ATP = UDP-N-acetyl-alpha-D-muramoyl-L-alanyl-D-glutamate + ADP + phosphate + H(+). It participates in cell wall biogenesis; peptidoglycan biosynthesis. Its function is as follows. Cell wall formation. Catalyzes the addition of glutamate to the nucleotide precursor UDP-N-acetylmuramoyl-L-alanine (UMA). The protein is UDP-N-acetylmuramoylalanine--D-glutamate ligase of Coxiella burnetii (strain CbuG_Q212) (Coxiella burnetii (strain Q212)).